The following is a 402-amino-acid chain: UDP-glucose 6-dehydrogenase (402 aa).

Residues lysine 2–leucine 19, valine 11, aspartate 29, lysine 34, threonine 83, threonine 118, and glutamate 145 contribute to the NAD(+) site. Substrate-binding positions include glutamate 141 to glutamate 145, lysine 204, asparagine 208, tyrosine 249 to serine 253, and glycine 257. NAD(+) is bound at residue tyrosine 259. The active-site Nucleophile is the cysteine 260. Lysine 263 is a binding site for NAD(+). Residue lysine 320 coordinates substrate. NAD(+) is bound at residue arginine 327.

It belongs to the UDP-glucose/GDP-mannose dehydrogenase family.

It catalyses the reaction UDP-alpha-D-glucose + 2 NAD(+) + H2O = UDP-alpha-D-glucuronate + 2 NADH + 3 H(+). It participates in nucleotide-sugar biosynthesis; UDP-alpha-D-glucuronate biosynthesis; UDP-alpha-D-glucuronate from UDP-alpha-D-glucose: step 1/1. In terms of biological role, catalyzes the formation of UDP-glucuronic acid which is required for capsular hyaluronic acid synthesis. The sequence is that of UDP-glucose 6-dehydrogenase (hasB) from Streptococcus pyogenes serotype M18 (strain MGAS8232).